The primary structure comprises 971 residues: Breast cancer type 2 susceptibility protein homolog (971 aa).

A compositionally biased stretch (polar residues) spans 1–15 (MDQNGASGSHPNRLS). Disordered regions lie at residues 1–30 (MDQNGASGSHPNRLSQGRGAHARERGATVS), 130–155 (SRKRDPKSHKAVQNEKRRGSSGLSVQ), 349–395 (KLKL…DQPN), and 420–466 (MQCS…SSHQ). Residues 130–139 (SRKRDPKSHK) are compositionally biased toward basic residues. Residues 349-364 (KLKLEPSSQKEQKSSK) show a composition bias toward basic and acidic residues. 3 stretches are compositionally biased toward polar residues: residues 375–392 (SKQSCDINTKNEGTTILD), 420–432 (MQCSNGPSTSKNA), and 453–466 (KQTPNKSQTISSHQ). BRCA2 repeat units lie at residues 570-604 (AEPEFCGFRTASNKAIPISEKMKIKTAEFMAEFQS), 671-705 (NESQFFGFRTASNKAIEITEAMEKRGAMFLAQSKA), and 746-780 (SETEFFGFRTASNKGIVISENTKIKVAQFMSEFQA). The tract at residues 916–971 (MERFAPKPSSTSTPLADRDLNRSKDCTKNRQDAEDMSPICMQPKKSRRLGLSRSRY) is disordered. Residues 931–948 (ADRDLNRSKDCTKNRQDA) show a composition bias toward basic and acidic residues. Residues 959 to 971 (KKSRRLGLSRSRY) show a composition bias toward basic residues.

As to quaternary structure, interacts with Rad9. Interacts with spn-A/Rad51. Interacts with cyclin CycG.

Its subcellular location is the nucleus. Involved in and required for double-strand break repair by meiotic and mitotic homologous recombination. During meiosis, has a dual role in the repair of meiotic double-stranded breaks and the efficient activation of the meiotic recombination checkpoint. This Drosophila melanogaster (Fruit fly) protein is Breast cancer type 2 susceptibility protein homolog.